Here is a 533-residue protein sequence, read N- to C-terminus: Beta-apo-4'-carotenal oxygenase (533 aa).

Catalysis depends on residues Glu226 and Cys260.

The protein belongs to the aldehyde dehydrogenase family.

The catalysed reaction is 4'-apo-beta-carotenal + NAD(+) + H2O = neurosporaxanthin + NADH + 2 H(+). Functionally, beta-apo-4'-carotenal oxygenase involved in the last step of synthesis of neurosporaxanthin, a carboxylic apocarotenoid acting as an essential protective pigment and leading to orange pigmentation. Converts the aldehyde beta-apo-4'-carotenal into neurosporaxanthin. Neurosporaxanthin is synthesized from geranyl-geranyl pyrophosphate (GGPP) through several enzymatic activities. Phytoene synthase activity performed by the bifunctional enzyme al-2 first produces phytoene from geranyl-geranyl pyrophosphate (GGPP). The phytoene dehydrogenase al-1 then introduces 5 desaturations to lead to 3,4-didehydrolycopene via the intermediates phytofluene, zeta-carotene, neurosporene and lycopene. Al-2 cyclase activity then converts 3,4-didehydrolycopene into torulene. Al-2 can also convet lycopene into gamma-carotene which in turn is converted to beta-carotene by an additional al-2 cyclization reaction. Torulene is the substrate of the dioxidase cao-2 that breaks the molecule, removing five carbon atoms to yield beta-apo-4'-carotenal, whereas the aldehyde dehydrogenase ylo-1 mediates the last step by converting beta-apo-4'-carotenal into neurosporaxanthin. The polypeptide is Beta-apo-4'-carotenal oxygenase (Neurospora crassa (strain ATCC 24698 / 74-OR23-1A / CBS 708.71 / DSM 1257 / FGSC 987)).